Consider the following 247-residue polypeptide: 3-oxoacyl-[acyl-carrier-protein] reductase (247 aa).

Residue 11–35 coordinates NADP(+); the sequence is VTGASRGIGKATALALAATGMKVVV. A substrate-binding site is contributed by Ser-143. Tyr-156 acts as the Proton acceptor in catalysis.

Belongs to the short-chain dehydrogenases/reductases (SDR) family.

It carries out the reaction a (3R)-hydroxyacyl-[ACP] + NADP(+) = a 3-oxoacyl-[ACP] + NADPH + H(+). The protein operates within lipid metabolism; fatty acid biosynthesis. Functionally, catalyzes the NADPH-dependent reduction of beta-ketoacyl-ACP substrates to beta-hydroxyacyl-ACP products, the first reductive step in the elongation cycle of fatty acid biosynthesis. Is capable of reducing acetoacetyl-CoA, but less well than its paralog PhaB. The polypeptide is 3-oxoacyl-[acyl-carrier-protein] reductase (fabG) (Synechocystis sp. (strain ATCC 27184 / PCC 6803 / Kazusa)).